The chain runs to 289 residues: 18S rRNA (guanine-N(7))-methyltransferase RID2 (289 aa).

Positions 215–289 (KNEYDESCSE…FTSRKRRTRF (75 aa)) are disordered. The span at 219–237 (DESCSEDDNSDDEESEEVG) shows a compositional bias: acidic residues. Residues 243 to 254 (RPRKRQRTNTKV) are compositionally biased toward basic residues. The span at 255–264 (KGREWVLRKK) shows a compositional bias: basic and acidic residues. A Nuclear localization signal motif is present at residues 268–275 (RRKGKNVP).

It belongs to the class I-like SAM-binding methyltransferase superfamily. BUD23/WBSCR22 family. Expressed in seedlings, roots and flowers.

It localises to the nucleus. The protein resides in the nucleoplasm. Its subcellular location is the cytoplasm. It is found in the perinuclear region. The protein localises to the nucleolus. The enzyme catalyses guanosine(1575) in yeast 18S rRNA + S-adenosyl-L-methionine = N(7)-methylguanosine(1575) in yeast 18S rRNA + S-adenosyl-L-homocysteine. Functionally, essential protein. S-adenosyl-L-methionine-dependent methyltransferase that specifically methylates the N(7) position of a guanine in 18S rRNA. Requires the methyltransferase adapter protein TRM112 for full rRNA methyltransferase activity. Important for biogenesis end export of the 40S ribosomal subunit independent on its methyltransferase activity. Involved in the pre-rRNA processing steps in the nucleolus leading to small-subunit rRNA production independently of its RNA-modifying catalytic activity. Supports cell proliferation. Required for the initiation of lateral root primordia formation and for the root apical meristem (RAM) organization as well as for leaves development. During callus formation from hypocotyl and root explants, required for the initial stage of reactivation of cell proliferation in the hypocotyl stele. Involved in leaf polarity establishment by functioning cooperatively with AS2 to repress abaxial genes ARF3, ARF4, KAN1, KAN2, YAB1 and YAB5, and the knox homeobox genes KNAT1, KNAT2, KNAT6, and STM to promote adaxial development in leaf primordia at shoot apical meristems at high temperatures. The polypeptide is 18S rRNA (guanine-N(7))-methyltransferase RID2 (Arabidopsis thaliana (Mouse-ear cress)).